The chain runs to 404 residues: Probable tRNA sulfurtransferase (404 aa).

In terms of domain architecture, THUMP spans 61 to 166 (EAVSERLKDV…SGYSYIMCDE (106 aa)). ATP-binding positions include 184–185 (LL), 209–210 (HF), Arg266, Gly288, and Gln297.

Belongs to the ThiI family.

It is found in the cytoplasm. The catalysed reaction is [ThiI sulfur-carrier protein]-S-sulfanyl-L-cysteine + a uridine in tRNA + 2 reduced [2Fe-2S]-[ferredoxin] + ATP + H(+) = [ThiI sulfur-carrier protein]-L-cysteine + a 4-thiouridine in tRNA + 2 oxidized [2Fe-2S]-[ferredoxin] + AMP + diphosphate. It carries out the reaction [ThiS sulfur-carrier protein]-C-terminal Gly-Gly-AMP + S-sulfanyl-L-cysteinyl-[cysteine desulfurase] + AH2 = [ThiS sulfur-carrier protein]-C-terminal-Gly-aminoethanethioate + L-cysteinyl-[cysteine desulfurase] + A + AMP + 2 H(+). The protein operates within cofactor biosynthesis; thiamine diphosphate biosynthesis. Its function is as follows. Catalyzes the ATP-dependent transfer of a sulfur to tRNA to produce 4-thiouridine in position 8 of tRNAs, which functions as a near-UV photosensor. Also catalyzes the transfer of sulfur to the sulfur carrier protein ThiS, forming ThiS-thiocarboxylate. This is a step in the synthesis of thiazole, in the thiamine biosynthesis pathway. The sulfur is donated as persulfide by IscS. This chain is Probable tRNA sulfurtransferase, found in Bacillus cereus (strain B4264).